The sequence spans 362 residues: Ribosome-binding ATPase YchF (362 aa).

The OBG-type G domain occupies 2 to 258 (LSAGIVGLPN…LDANGRQDWL (257 aa)). An ATP-binding site is contributed by 11–16 (NVGKST). Residues Ser15 and Thr35 each coordinate Mg(2+). A TGS domain is found at 281–347 (GLWSFFTFGK…EAKKQGLVRL (67 aa)).

This sequence belongs to the TRAFAC class OBG-HflX-like GTPase superfamily. OBG GTPase family. YchF/OLA1 subfamily. Mg(2+) is required as a cofactor.

ATPase that binds to both the 70S ribosome and the 50S ribosomal subunit in a nucleotide-independent manner. The sequence is that of Ribosome-binding ATPase YchF from Mycoplasma pneumoniae (strain ATCC 29342 / M129 / Subtype 1) (Mycoplasmoides pneumoniae).